Here is a 772-residue protein sequence, read N- to C-terminus: Semaphorin-3A (772 aa).

An N-terminal signal peptide occupies residues 1-20 (MGWFTGIACLFWGILLTARA). In terms of domain architecture, Sema spans 31-514 (RLKLSYKEML…STAGVAQLPL (484 aa)). N-linked (GlcNAc...) asparagine glycosylation is present at N53. C103 and C114 form a disulfide bridge. N-linked (GlcNAc...) asparagine glycosylation is present at N125. Intrachain disulfides connect C132–C141, C269–C381, C293–C341, and C517–C535. The 89-residue stretch at 577-665 (HGHSLEERII…GFMQTLLKVT (89 aa)) folds into the Ig-like C2-type domain. N591 carries N-linked (GlcNAc...) asparagine glycosylation. C650 and C723 are oxidised to a cystine. Residues 677-691 (LLHKDDDGDGSKTKE) show a composition bias toward basic and acidic residues. Disordered regions lie at residues 677–698 (LLHK…SMTP) and 729–772 (RDRK…PRSV). Residues 729–738 (RDRKQRRQRP) are compositionally biased toward basic residues. Over residues 750-772 (HMQESKKGRNRRTHEFERAPRSV) the composition is skewed to basic and acidic residues.

It belongs to the semaphorin family. In terms of assembly, interacts with PLXND1. In terms of tissue distribution, expressed in the dorsal root ganglia.

The protein localises to the secreted. Its function is as follows. May be involved in guiding growing axons towards their targets by forming a molecular boundary that instructs axons to engage in the formation of specific nerve tracts. Binds to neuropilin. Involved in the development of the olfactory system and in neuronal control of puberty. The sequence is that of Semaphorin-3A (Sema3a) from Rattus norvegicus (Rat).